Reading from the N-terminus, the 299-residue chain is Probable endonuclease 4 (299 aa).

Residues His-68, His-110, Glu-145, Asp-179, His-182, His-214, Asp-227, His-229, and Glu-259 each contribute to the Zn(2+) site.

Belongs to the AP endonuclease 2 family. Zn(2+) is required as a cofactor.

It catalyses the reaction Endonucleolytic cleavage to 5'-phosphooligonucleotide end-products.. Functionally, endonuclease IV plays a role in DNA repair. It cleaves phosphodiester bonds at apurinic or apyrimidinic (AP) sites, generating a 3'-hydroxyl group and a 5'-terminal sugar phosphate. In Exiguobacterium sibiricum (strain DSM 17290 / CCUG 55495 / CIP 109462 / JCM 13490 / 255-15), this protein is Probable endonuclease 4.